Reading from the N-terminus, the 323-residue chain is Fructokinase-1 (323 aa).

This sequence belongs to the carbohydrate kinase PfkB family. In terms of tissue distribution, expressed in stems, at higher levels in roots, and hardly detectable in leaves.

The enzyme catalyses D-fructose + ATP = D-fructose 6-phosphate + ADP + H(+). The protein operates within glycan biosynthesis; starch biosynthesis. Inhibited at high fructose. Its function is as follows. May play an important role in maintaining the flux of carbon towards starch formation in endosperm. May also be involved in a sugar-sensing pathway. In Zea mays (Maize), this protein is Fructokinase-1 (FRK1).